A 341-amino-acid polypeptide reads, in one-letter code: Ribulose-5-phosphate reductase 1 (341 aa).

Residues C38, H64, E65, and E144 each contribute to the Zn(2+) site.

It belongs to the zinc-containing alcohol dehydrogenase family. In terms of assembly, heterodimer together with TarI. Can also form a dimer of heterodimers. Zn(2+) serves as cofactor.

It catalyses the reaction D-ribitol 5-phosphate + NADP(+) = D-ribulose 5-phosphate + NADPH + H(+). It participates in cell wall biogenesis; poly(ribitol phosphate) teichoic acid biosynthesis. Catalyzes the NADPH dependent reduction of D-ribulose 5-phosphate to D-ribitol 5-phosphate. The chain is Ribulose-5-phosphate reductase 1 from Staphylococcus aureus (strain NCTC 8325 / PS 47).